Consider the following 236-residue polypeptide: MLILGLTGSIATGKSTVSREFQEKYHIKIIDADVLARKVVEPNTPCLIKIQKEFGNEVLHEDGTLNRAKLGQAVFQDAGKRSLLNSIIHPAVRLEMLKELLRCYVRGYSIVILDVPLLFEAKMQFICWKTICVSCDKSIQKQRLLARNPELTAEDAENRVQAQMPLELKCQLADIVIENNSDLETLYENIHNVLPLITPSYFFTLLCLILPPLQITLQVIAFVSQKKKVSEFRKHI.

Residues Ile-3–Leu-208 form the DPCK domain. Residue Gly-8–Ser-15 coordinates ATP. Phosphoserine is present on residues Ser-82 and Ser-86.

Belongs to the CoaE family.

The protein resides in the cytoplasm. This is an uncharacterized protein from Schizosaccharomyces pombe (strain 972 / ATCC 24843) (Fission yeast).